We begin with the raw amino-acid sequence, 53 residues long: Photoreceptor disk component PRCD (53 aa).

The S-palmitoyl cysteine moiety is linked to residue C2. The interval 24–53 (PEPSRVDGTVVGSGSDTDLQSTGREKGPVK) is disordered. Over residues 35 to 45 (GSGSDTDLQST) the composition is skewed to polar residues.

Belongs to the PRCD family. Interacts with RHO/rhodopsin; the interaction promotes PRCD stability. In terms of processing, palmitoylated at Cys-2. Palmitoylation is essential for protein stability and trafficking to the photoreceptor outer segment, but does not appear to be essential for membrane localization. Probably palmitoylated by ZDHHC3. Post-translationally, phosphorylated. As to expression, expressed in retina, where it localizes to both rod and cone photoreceptors (at protein level).

The protein resides in the cell projection. It is found in the cilium. It localises to the photoreceptor outer segment. Its subcellular location is the membrane. The protein localises to the endoplasmic reticulum. The protein resides in the golgi apparatus. Functionally, involved in vision. The polypeptide is Photoreceptor disk component PRCD (Mus musculus (Mouse)).